Here is a 340-residue protein sequence, read N- to C-terminus: NAD-dependent epimerase/dehydratase terH (340 aa).

The chain crosses the membrane as a helical span at residues 7–27 (IVPPGGLVLVTGVTGFIGSYI). Asn-139 carries an N-linked (GlcNAc...) asparagine glycan. Position 176 (Tyr-176) interacts with NADP(+).

It belongs to the NAD(P)-dependent epimerase/dehydratase family. Dihydroflavonol-4-reductase subfamily.

The protein localises to the membrane. Functionally, NAD-dependent epimerase/dehydratase; part of the gene cluster that mediates the biosynthesis of terrein, a fungal metabolite with ecological, antimicrobial, antiproliferative, and antioxidative activities. The first step in the pathway is performed by the polyketide synthase terA that produces 4-hydroxy-6-methylpyranon (4-HMP), orsellinic acid (OA), and 2,3-dehydro-6-hydroxymellein (2,3-dehydro-6-HM) by condensing acetyl-CoA with two, three, or four malonyl-CoA units, respectively. 4-HMP and OA are not pathway intermediates, but are rather shunt or side products. 2,3-dehydro-6-HM is further converted to 6-hydroxymellein (6-HM) by the 6-hydroxymellein synthase terB. The monooxygenases terC and terD, the multicopper oxidase terE and the Kelch-like protein terF are then involved in the transformation of 6-HM to terrein. Even if they are co-regulated with the other terrein cluster genes, terH and terI seem to be dispensable for terrein production; whereas one or both of the 2 transporters terG and terJ are probably required for efficient secretion of metabolites. The protein is NAD-dependent epimerase/dehydratase terH of Aspergillus terreus (strain NIH 2624 / FGSC A1156).